The primary structure comprises 716 residues: Fatty acid oxidation complex subunit alpha (716 aa).

Residues Met1–Ala189 form an enoyl-CoA hydratase/isomerase region. Asp296 provides a ligand contact to substrate. Residues Lys311–Ala716 are 3-hydroxyacyl-CoA dehydrogenase. Residues Met324, Asp343, Val400–Glu402, Lys407, and Ser429 each bind NAD(+). Residue His450 is the For 3-hydroxyacyl-CoA dehydrogenase activity of the active site. An NAD(+)-binding site is contributed by Asn453. Asn500 and Tyr660 together coordinate substrate.

The protein in the N-terminal section; belongs to the enoyl-CoA hydratase/isomerase family. In the C-terminal section; belongs to the 3-hydroxyacyl-CoA dehydrogenase family. Heterotetramer of two alpha chains (FadB) and two beta chains (FadA).

It carries out the reaction a (3S)-3-hydroxyacyl-CoA + NAD(+) = a 3-oxoacyl-CoA + NADH + H(+). The catalysed reaction is a (3S)-3-hydroxyacyl-CoA = a (2E)-enoyl-CoA + H2O. It catalyses the reaction a 4-saturated-(3S)-3-hydroxyacyl-CoA = a (3E)-enoyl-CoA + H2O. The enzyme catalyses (3S)-3-hydroxybutanoyl-CoA = (3R)-3-hydroxybutanoyl-CoA. It carries out the reaction a (3Z)-enoyl-CoA = a 4-saturated (2E)-enoyl-CoA. The catalysed reaction is a (3E)-enoyl-CoA = a 4-saturated (2E)-enoyl-CoA. The protein operates within lipid metabolism; fatty acid beta-oxidation. Its function is as follows. Involved in the aerobic and anaerobic degradation of long-chain fatty acids via beta-oxidation cycle. Catalyzes the formation of 3-oxoacyl-CoA from enoyl-CoA via L-3-hydroxyacyl-CoA. It can also use D-3-hydroxyacyl-CoA and cis-3-enoyl-CoA as substrate. The protein is Fatty acid oxidation complex subunit alpha of Shewanella sp. (strain ANA-3).